Here is a 78-residue protein sequence, read N- to C-terminus: MPPLPGAELVHNPLQLYRYLLRCCKLLPTESLQHYYRHSVKQSFRVHADEDDPERIQQIIKRAIEDADWVLNKYKKES.

Belongs to the complex I LYR family. LYRM9 subfamily.

The protein is LYR motif-containing protein 9 (lyrm9) of Xenopus tropicalis (Western clawed frog).